Here is a 254-residue protein sequence, read N- to C-terminus: Alcohol dehydrogenase (254 aa).

10–33 (FVAGLGGIGLDTSREIVKSGPKNL) contacts NAD(+). S138 is a binding site for substrate. The Proton acceptor role is filled by Y151.

Belongs to the short-chain dehydrogenases/reductases (SDR) family. Homodimer.

The catalysed reaction is a primary alcohol + NAD(+) = an aldehyde + NADH + H(+). It catalyses the reaction a secondary alcohol + NAD(+) = a ketone + NADH + H(+). The chain is Alcohol dehydrogenase (Adh) from Drosophila flavomontana (Fruit fly).